A 358-amino-acid polypeptide reads, in one-letter code: Uroporphyrinogen decarboxylase (358 aa).

Substrate-binding positions include 36-40 (RQAGR), aspartate 85, tyrosine 160, serine 215, and histidine 338.

It belongs to the uroporphyrinogen decarboxylase family. In terms of assembly, homodimer.

The protein localises to the cytoplasm. The enzyme catalyses uroporphyrinogen III + 4 H(+) = coproporphyrinogen III + 4 CO2. It functions in the pathway porphyrin-containing compound metabolism; protoporphyrin-IX biosynthesis; coproporphyrinogen-III from 5-aminolevulinate: step 4/4. Functionally, catalyzes the decarboxylation of four acetate groups of uroporphyrinogen-III to yield coproporphyrinogen-III. The sequence is that of Uroporphyrinogen decarboxylase from Corynebacterium glutamicum (strain R).